A 343-amino-acid polypeptide reads, in one-letter code: MPLDDRKKKILYAVITDYIMTAEPIGSRTIAKKYNIGLSSATIRNEMADLEEMGYLEQPHTSAGRIPSDKGYRFYVDSILRNYINNDPPISYNTREEIIAEFDEIVKKYARILANITHHTTVAKMPKLNPDRIKKIQLIPVASNKMIFLVVTDTGIVKNYLLNLCQNVDRTIFEFLNNLLNEKIAGKSEKDIFEFLQQDLRQMLGEMAFIADELINTILLSLKQLQETDIYADGTSHILDFPEYKDLGKAKNFFNLLDNKSLLNEVLEPEVDFIDVRIGSENKFEEMKDLSVIKTTYKINGRVVGTIGIIGPTRMDYRKLISEINVMTKELSNLLSSIYNDEI.

It belongs to the HrcA family.

Negative regulator of class I heat shock genes (grpE-dnaK-dnaJ and groELS operons). Prevents heat-shock induction of these operons. This chain is Heat-inducible transcription repressor HrcA, found in Thermoanaerobacter pseudethanolicus (strain ATCC 33223 / 39E) (Clostridium thermohydrosulfuricum).